The primary structure comprises 143 residues: 1,4-dihydroxy-2-naphthoyl-CoA hydrolase (143 aa).

Residue Asp-14 is part of the active site.

The protein belongs to the 4-hydroxybenzoyl-CoA thioesterase family. DHNA-CoA hydrolase subfamily.

It carries out the reaction 1,4-dihydroxy-2-naphthoyl-CoA + H2O = 1,4-dihydroxy-2-naphthoate + CoA + H(+). Its pathway is cofactor biosynthesis; phylloquinone biosynthesis. The protein operates within quinol/quinone metabolism; 1,4-dihydroxy-2-naphthoate biosynthesis; 1,4-dihydroxy-2-naphthoate from chorismate: step 7/7. In terms of biological role, catalyzes the hydrolysis of 1,4-dihydroxy-2-naphthoyl-CoA (DHNA-CoA) to 1,4-dihydroxy-2-naphthoate (DHNA), a reaction involved in phylloquinone (vitamin K1) biosynthesis. The polypeptide is 1,4-dihydroxy-2-naphthoyl-CoA hydrolase (Gloeothece citriformis (strain PCC 7424) (Cyanothece sp. (strain PCC 7424))).